The sequence spans 110 residues: UPF0122 protein YlxM (110 aa).

Belongs to the UPF0122 family.

Its function is as follows. Might take part in the signal recognition particle (SRP) pathway. This is inferred from the conservation of its genetic proximity to ftsY/ffh. May be a regulatory protein. This Bacillus subtilis (strain 168) protein is UPF0122 protein YlxM (ylxM).